The chain runs to 270 residues: Phosphatidylglycerol--prolipoprotein diacylglyceryl transferase (270 aa).

The next 7 membrane-spanning stretches (helical) occupy residues 10–30 (VAVA…LVGI), 56–76 (LIFW…VLFY), 92–112 (WKGG…AWWF), 120–140 (FFQL…AGRI), 175–195 (SQLY…NLYA), 202–222 (MAVS…VEFV), and 237–257 (VTMG…LIWL). R139 serves as a coordination point for a 1,2-diacyl-sn-glycero-3-phospho-(1'-sn-glycerol).

Belongs to the Lgt family.

Its subcellular location is the cell inner membrane. It catalyses the reaction L-cysteinyl-[prolipoprotein] + a 1,2-diacyl-sn-glycero-3-phospho-(1'-sn-glycerol) = an S-1,2-diacyl-sn-glyceryl-L-cysteinyl-[prolipoprotein] + sn-glycerol 1-phosphate + H(+). Its pathway is protein modification; lipoprotein biosynthesis (diacylglyceryl transfer). Catalyzes the transfer of the diacylglyceryl group from phosphatidylglycerol to the sulfhydryl group of the N-terminal cysteine of a prolipoprotein, the first step in the formation of mature lipoproteins. The sequence is that of Phosphatidylglycerol--prolipoprotein diacylglyceryl transferase from Pseudomonas syringae pv. tomato (strain ATCC BAA-871 / DC3000).